We begin with the raw amino-acid sequence, 1153 residues long: PPi-type phosphoenolpyruvate carboxykinase 2 (1153 aa).

A coiled-coil region spans residues 1085 to 1131 (RQKLEVAKLNKDLAYLNKTIAEKPRLVETLNKQIAAVKEELQYVSSE).

Belongs to the PPi-type phosphoenolpyruvate carboxykinase family. As to quaternary structure, monomer and trimer; forms heterotrimers with PEPCK1 and PEPCK3.

It localises to the cytoplasm. The protein resides in the cytosol. The enzyme catalyses oxaloacetate + diphosphate = phosphoenolpyruvate + phosphate + CO2. Inorganic pyrophosphate (PPi)-dependent phosphoenolpyruvate carboxykinase, which regulates the carbon flow of the central metabolism by fixing CO(2) to phosphoenolpyruvate to produce oxaloacetate. Can also produce pyruvate and diphosphate from phosphoenolpyruvate and phosphate. This is PPi-type phosphoenolpyruvate carboxykinase 2 from Entamoeba histolytica (strain ATCC 30459 / HM-1:IMSS / ABRM).